We begin with the raw amino-acid sequence, 563 residues long: Serine/threonine-protein kinase WNK8 (563 aa).

Positions 29 to 286 constitute a Protein kinase domain; it reads IRYDDVLGRG…ALELSKDPFL (258 aa). ATP-binding positions include 109 to 112 and Lys-159; that span reads TELF. Asp-176 functions as the Proton acceptor in the catalytic mechanism. Positions 426 to 436 are enriched in polar residues; sequence TSSHHNQNSPR. Positions 426–459 are disordered; it reads TSSHHNQNSPRLTHEDHEAANQQTVNSKDEEAAG. Ser-509 carries the post-translational modification Phosphoserine.

The protein belongs to the protein kinase superfamily. Ser/Thr protein kinase family. WNK subfamily. Interacts with RGS1 and GB1, but not with GPA1. The association with RGS1 at the plasma membrane is triggered by induction of glucose. Binds to EDM2 in nucleus. Post-translationally, autophosphorylated.

The protein localises to the nucleus. The catalysed reaction is L-seryl-[protein] + ATP = O-phospho-L-seryl-[protein] + ADP + H(+). It carries out the reaction L-threonyl-[protein] + ATP = O-phospho-L-threonyl-[protein] + ADP + H(+). Regulates flowering time by modulating the photoperiod pathway. Phosphorylates the vacuolar ATPase subunit C (VATC) and RGS1. Regulates EDM2 that, in turn, modulates development processes. The sequence is that of Serine/threonine-protein kinase WNK8 (WNK8) from Arabidopsis thaliana (Mouse-ear cress).